The chain runs to 216 residues: Nucleoside triphosphate pyrophosphatase (216 aa).

Aspartate 82 (proton acceptor) is an active-site residue.

The protein belongs to the Maf family. Requires a divalent metal cation as cofactor.

The protein localises to the cytoplasm. It carries out the reaction a ribonucleoside 5'-triphosphate + H2O = a ribonucleoside 5'-phosphate + diphosphate + H(+). The enzyme catalyses a 2'-deoxyribonucleoside 5'-triphosphate + H2O = a 2'-deoxyribonucleoside 5'-phosphate + diphosphate + H(+). In terms of biological role, nucleoside triphosphate pyrophosphatase. May have a dual role in cell division arrest and in preventing the incorporation of modified nucleotides into cellular nucleic acids. The polypeptide is Nucleoside triphosphate pyrophosphatase (Mycobacterium ulcerans (strain Agy99)).